The primary structure comprises 89 residues: Endoribonuclease VapD 1 (89 aa).

Belongs to the VapD ribonuclease family. In terms of assembly, homodimer.

In terms of biological role, cleaves ssRNA, mostly between U:A. This is Endoribonuclease VapD 1 from Riemerella anatipestifer (Moraxella anatipestifer).